Here is a 127-residue protein sequence, read N- to C-terminus: MORF4 family-associated protein 1 (127 aa).

A disordered region spans residues 76-97 (ESALNHLQNPDDGAEGRGTKRC). Residues 92-126 (RGTKRCEKAEEKAKEIAKMAEMLVELVRRIEKSES) adopt a coiled-coil conformation.

The protein belongs to the MORF4 family-associated protein family. In terms of assembly, found in a complex composed of MORF4L1, MRFAP1 and RB1. Interacts via its N-terminus with MORF4L1. Interacts with CSTB and MORF4L2.

The protein localises to the nucleus. It is found in the cytoplasm. The protein resides in the perinuclear region. The chain is MORF4 family-associated protein 1 from Bos taurus (Bovine).